A 351-amino-acid polypeptide reads, in one-letter code: Photosystem II D2 protein (351 aa).

Residues 39–59 (CAFLALGGWLTGTTFVTSWYT) form a helical membrane-spanning segment. Histidine 116 provides a ligand contact to chlorophyll a. Residues 123–139 (GFMLRQFEIARLVGIRP) traverse the membrane as a helical segment. The pheophytin a site is built by glutamine 128 and asparagine 141. A helical transmembrane segment spans residues 151-164 (VFVSVFLMYPLGQS). Histidine 196 is a chlorophyll a binding site. Residues 206-226 (GALLCAIHGATVENTLFEDGE) form a helical membrane-spanning segment. 2 residues coordinate a plastoquinone: histidine 213 and phenylalanine 260. Residue histidine 213 participates in Fe cation binding. Residue histidine 267 coordinates Fe cation. A helical membrane pass occupies residues 277–293 (GLWMSAVGIVGLALNLR).

It belongs to the reaction center PufL/M/PsbA/D family. As to quaternary structure, PSII is composed of 1 copy each of membrane proteins PsbA, PsbB, PsbC, PsbD, PsbE, PsbF, PsbH, PsbI, PsbJ, PsbK, PsbL, PsbM, PsbT, PsbX, PsbY, PsbZ, Psb30/Ycf12, peripheral proteins PsbO, CyanoQ (PsbQ), PsbU, PsbV and a large number of cofactors. It forms dimeric complexes. The D1/D2 heterodimer binds P680, chlorophylls that are the primary electron donor of PSII, and subsequent electron acceptors. It shares a non-heme iron and each subunit binds pheophytin, quinone, additional chlorophylls, carotenoids and lipids. There is also a Cl(-1) ion associated with D1 and D2, which is required for oxygen evolution. The PSII complex binds additional chlorophylls, carotenoids and specific lipids. is required as a cofactor.

It localises to the cellular thylakoid membrane. The catalysed reaction is 2 a plastoquinone + 4 hnu + 2 H2O = 2 a plastoquinol + O2. In terms of biological role, photosystem II (PSII) is a light-driven water:plastoquinone oxidoreductase that uses light energy to abstract electrons from H(2)O, generating O(2) and a proton gradient subsequently used for ATP formation. It consists of a core antenna complex that captures photons, and an electron transfer chain that converts photonic excitation into a charge separation. The D1/D2 (PsbA/PsbD) reaction center heterodimer binds P680, the primary electron donor of PSII as well as several subsequent electron acceptors. D2 is needed for assembly of a stable PSII complex. This Nostoc sp. (strain PCC 7120 / SAG 25.82 / UTEX 2576) protein is Photosystem II D2 protein.